A 445-amino-acid polypeptide reads, in one-letter code: ATP-dependent protease ATPase subunit HslU (445 aa).

ATP contacts are provided by residues Val18, 60–65 (GVGKTE), Asp254, Glu319, and Arg391.

The protein belongs to the ClpX chaperone family. HslU subfamily. A double ring-shaped homohexamer of HslV is capped on each side by a ring-shaped HslU homohexamer. The assembly of the HslU/HslV complex is dependent on binding of ATP.

It is found in the cytoplasm. Its function is as follows. ATPase subunit of a proteasome-like degradation complex; this subunit has chaperone activity. The binding of ATP and its subsequent hydrolysis by HslU are essential for unfolding of protein substrates subsequently hydrolyzed by HslV. HslU recognizes the N-terminal part of its protein substrates and unfolds these before they are guided to HslV for hydrolysis. This Alcanivorax borkumensis (strain ATCC 700651 / DSM 11573 / NCIMB 13689 / SK2) protein is ATP-dependent protease ATPase subunit HslU.